We begin with the raw amino-acid sequence, 244 residues long: 2-C-methyl-D-erythritol 4-phosphate cytidylyltransferase (244 aa).

The protein belongs to the IspD/TarI cytidylyltransferase family. IspD subfamily.

It catalyses the reaction 2-C-methyl-D-erythritol 4-phosphate + CTP + H(+) = 4-CDP-2-C-methyl-D-erythritol + diphosphate. It functions in the pathway isoprenoid biosynthesis; isopentenyl diphosphate biosynthesis via DXP pathway; isopentenyl diphosphate from 1-deoxy-D-xylulose 5-phosphate: step 2/6. Its function is as follows. Catalyzes the formation of 4-diphosphocytidyl-2-C-methyl-D-erythritol from CTP and 2-C-methyl-D-erythritol 4-phosphate (MEP). This is 2-C-methyl-D-erythritol 4-phosphate cytidylyltransferase from Corynebacterium diphtheriae (strain ATCC 700971 / NCTC 13129 / Biotype gravis).